The chain runs to 307 residues: Zygote arrest protein 2.L (307 aa).

The interval 138-200 is disordered; it reads LPQGGRLPKK…EEPGNEEQTK (63 aa). Basic and acidic residues predominate over residues 156–186; it reads LKERAPSPEDKEREKVSEKEPDTKDELEKRP. The segment at 208–293 adopts a 3CxxC-type zinc-finger fold; it reads QKYGYFHCKD…QELCGRCKNK (86 aa).

Belongs to the ZAR1 family. Expressed in oocytes.

It localises to the cytoplasm. The protein localises to the cytoplasmic ribonucleoprotein granule. In terms of biological role, mRNA-binding protein required for maternal mRNA storage, translation and degradation during oocyte maturation. Probably promotes formation of some phase-separated membraneless compartment that stores maternal mRNAs in oocytes: acts by undergoing liquid-liquid phase separation upon binding to maternal mRNAs. Binds to the 3'-UTR of maternal mRNAs, inhibiting their translation. In Xenopus laevis (African clawed frog), this protein is Zygote arrest protein 2.L (zar2.L).